The chain runs to 662 residues: Neurexin-2-beta (662 aa).

Positions Met-1–Gly-10 are enriched in gly residues. Residues Met-1–Pro-27 form a disordered region. Positions Met-1–Gly-46 are cleaved as a signal peptide. Over Ala-47–Thr-586 the chain is Extracellular. A Laminin G-like domain is found at Thr-87–Ser-295. 2 residues coordinate Ca(2+): Asp-139 and Val-156. Asn-186 carries N-linked (GlcNAc...) asparagine glycosylation. Residues Ile-238 and Asn-240 each contribute to the Ca(2+) site. An O-linked (Xyl...) (heparan sulfate) serine glycan is attached at Ser-350. 3 disordered regions span residues Ala-408–Thr-458, Leu-476–Ala-496, and Leu-530–Pro-557. A helical membrane pass occupies residues Gly-587 to Met-607. The Cytoplasmic portion of the chain corresponds to Tyr-608 to Val-662. A disordered region spans residues Asn-629 to Val-662.

It belongs to the neurexin family. As to quaternary structure, interacts (via cytoplasmic C-terminal region) with CASK. Isoform Beta 4b binds alpha-dystroglycan and neuroligins NLGN1, NLGN2 and NLGN3. Interacts with CBLN1, CBLN2 and, less avidly, with CBLN4. Interacts with CLSTN3. Post-translationally, O-glycosylated; contains heparan sulfate. Heparan sulfate attachment is required for synapse development by mediating interactions with neuroligins. In terms of tissue distribution, brain (neuronal synapse).

Its subcellular location is the presynaptic cell membrane. Neuronal cell surface protein that may be involved in cell recognition and cell adhesion. The chain is Neurexin-2-beta (Nrxn2) from Rattus norvegicus (Rat).